The following is a 762-amino-acid chain: 5-methyltetrahydropteroyltriglutamate--homocysteine methyltransferase (762 aa).

5-methyltetrahydropteroyltri-L-glutamate-binding positions include 17–20 (REWK) and Lys111. Residues 435–437 (IGS) and Glu488 each bind L-homocysteine. L-methionine contacts are provided by residues 435-437 (IGS) and Glu488. Residues 519–520 (RC) and Trp565 each bind 5-methyltetrahydropteroyltri-L-glutamate. Position 603 (Asp603) interacts with L-homocysteine. Position 603 (Asp603) interacts with L-methionine. 5-methyltetrahydropteroyltri-L-glutamate is bound at residue Glu609. Positions 645, 647, and 669 each coordinate Zn(2+). The Proton donor role is filled by His698. Residue Cys730 coordinates Zn(2+).

The protein belongs to the vitamin-B12 independent methionine synthase family. Requires Zn(2+) as cofactor.

It catalyses the reaction 5-methyltetrahydropteroyltri-L-glutamate + L-homocysteine = tetrahydropteroyltri-L-glutamate + L-methionine. The protein operates within amino-acid biosynthesis; L-methionine biosynthesis via de novo pathway; L-methionine from L-homocysteine (MetE route): step 1/1. In terms of biological role, catalyzes the transfer of a methyl group from 5-methyltetrahydrofolate to homocysteine resulting in methionine formation. The protein is 5-methyltetrahydropteroyltriglutamate--homocysteine methyltransferase of Bacillus cereus (strain G9842).